A 73-amino-acid chain; its full sequence is Translation initiation factor IF-1 (73 aa).

The 73-residue stretch at 1–73 folds into the S1-like domain; the sequence is MAKKDGAIEI…TRGRIVYRYK (73 aa).

This sequence belongs to the IF-1 family. Component of the 30S ribosomal translation pre-initiation complex which assembles on the 30S ribosome in the order IF-2 and IF-3, IF-1 and N-formylmethionyl-tRNA(fMet); mRNA recruitment can occur at any time during PIC assembly.

It is found in the cytoplasm. Its function is as follows. One of the essential components for the initiation of protein synthesis. Stabilizes the binding of IF-2 and IF-3 on the 30S subunit to which N-formylmethionyl-tRNA(fMet) subsequently binds. Helps modulate mRNA selection, yielding the 30S pre-initiation complex (PIC). Upon addition of the 50S ribosomal subunit IF-1, IF-2 and IF-3 are released leaving the mature 70S translation initiation complex. The protein is Translation initiation factor IF-1 of Thermobifida fusca (strain YX).